The sequence spans 501 residues: Dynein regulatory complex subunit 5 (501 aa).

Over residues 1-23 (MQDTVTTSALLDPSHSSVSTQDN) the composition is skewed to polar residues. Disordered regions lie at residues 1–56 (MQDT…HPRA) and 202–222 (LPAQ…EMEE). The span at 24-34 (SSTGGHTSSTS) shows a compositional bias: low complexity. LRR repeat units lie at residues 308–321 (VLEE…LIGD), 335–355 (RLRV…QSLA), 363–383 (NLIS…QALA), 391–411 (CLTT…TLLS), and 419–439 (TLTS…KQLL).

This sequence belongs to the DRC5 family. Component of the nexin-dynein regulatory complex (N-DRC). Interacts with DRC1. Interacts with FBXL13/DRC6, DRC3 and DRC7.

The protein localises to the cell projection. Its subcellular location is the cilium. It is found in the flagellum. The protein resides in the cytoplasm. It localises to the cytoskeleton. The protein localises to the flagellum axoneme. Its function is as follows. Component of the nexin-dynein regulatory complex (N-DRC) a key regulator of ciliary/flagellar motility which maintains the alignment and integrity of the distal axoneme and regulates microtubule sliding in motile axonemes. May play a role in the assembly of N-DRC. May be required for sperm motility. The chain is Dynein regulatory complex subunit 5 (TCTE1) from Homo sapiens (Human).